A 334-amino-acid chain; its full sequence is Aspartate carbamoyltransferase catalytic subunit (334 aa).

Residues Arg71 and Thr72 each coordinate carbamoyl phosphate. Lys99 lines the L-aspartate pocket. Carbamoyl phosphate contacts are provided by Arg121, His151, and Gln154. Positions 184 and 239 each coordinate L-aspartate. 2 residues coordinate carbamoyl phosphate: Gly280 and Pro281.

Belongs to the aspartate/ornithine carbamoyltransferase superfamily. ATCase family. As to quaternary structure, heterododecamer (2C3:3R2) of six catalytic PyrB chains organized as two trimers (C3), and six regulatory PyrI chains organized as three dimers (R2).

The catalysed reaction is carbamoyl phosphate + L-aspartate = N-carbamoyl-L-aspartate + phosphate + H(+). Its pathway is pyrimidine metabolism; UMP biosynthesis via de novo pathway; (S)-dihydroorotate from bicarbonate: step 2/3. In terms of biological role, catalyzes the condensation of carbamoyl phosphate and aspartate to form carbamoyl aspartate and inorganic phosphate, the committed step in the de novo pyrimidine nucleotide biosynthesis pathway. The polypeptide is Aspartate carbamoyltransferase catalytic subunit (Pseudomonas fluorescens (strain Pf0-1)).